Here is a 148-residue protein sequence, read N- to C-terminus: 3-hydroxyacyl-[acyl-carrier-protein] dehydratase FabZ (148 aa).

His48 is a catalytic residue.

Belongs to the thioester dehydratase family. FabZ subfamily.

The protein resides in the cytoplasm. It carries out the reaction a (3R)-hydroxyacyl-[ACP] = a (2E)-enoyl-[ACP] + H2O. In terms of biological role, involved in unsaturated fatty acids biosynthesis. Catalyzes the dehydration of short chain beta-hydroxyacyl-ACPs and long chain saturated and unsaturated beta-hydroxyacyl-ACPs. This is 3-hydroxyacyl-[acyl-carrier-protein] dehydratase FabZ from Campylobacter curvus (strain 525.92).